Here is a 215-residue protein sequence, read N- to C-terminus: MKIIVTGFDPFGGEPINPALETIKSLPKTIAGAEIILVEIPTVFDKAADVLEEKMAEHLPDAVLCIGQAGGRVDLTPERIAINQDDARIPDNEGQQPIDRTIREDGQPAYFSTLPIKAMVEAIHRIGLPASVSNTAGTFVCNHLMYQALYLAEKQFPKTKAGFLHIPFLPEQVVDKPGLASMSLNDIVRGVEVAIGAIVEYRDKEDIKKGGGSTH.

Residues glutamate 78, cysteine 141, and histidine 165 contribute to the active site.

Belongs to the peptidase C15 family. Homotetramer.

It localises to the cytoplasm. It carries out the reaction Release of an N-terminal pyroglutamyl group from a polypeptide, the second amino acid generally not being Pro.. Functionally, removes 5-oxoproline from various penultimate amino acid residues except L-proline. The sequence is that of Pyrrolidone-carboxylate peptidase from Streptococcus suis (strain 98HAH33).